A 336-amino-acid chain; its full sequence is Dihydroorotate dehydrogenase (quinone) (336 aa).

FMN-binding positions include 62-66 and Thr86; that span reads AGLDK. A substrate-binding site is contributed by Lys66. 111-115 provides a ligand contact to substrate; sequence NRMGF. Residues Asn139 and Asn172 each coordinate FMN. Asn172 is a substrate binding site. The Nucleophile role is filled by Ser175. Asn177 provides a ligand contact to substrate. Positions 217 and 245 each coordinate FMN. 246 to 247 is a substrate binding site; the sequence is NT. Residues Gly268, Gly297, and 318–319 contribute to the FMN site; that span reads YS.

Belongs to the dihydroorotate dehydrogenase family. Type 2 subfamily. Monomer. The cofactor is FMN.

It is found in the cell membrane. The enzyme catalyses (S)-dihydroorotate + a quinone = orotate + a quinol. The protein operates within pyrimidine metabolism; UMP biosynthesis via de novo pathway; orotate from (S)-dihydroorotate (quinone route): step 1/1. Its function is as follows. Catalyzes the conversion of dihydroorotate to orotate with quinone as electron acceptor. The polypeptide is Dihydroorotate dehydrogenase (quinone) (Escherichia coli (strain SE11)).